Reading from the N-terminus, the 211-residue chain is N-(5'-phosphoribosyl)anthranilate isomerase (211 aa).

Belongs to the TrpF family.

The catalysed reaction is N-(5-phospho-beta-D-ribosyl)anthranilate = 1-(2-carboxyphenylamino)-1-deoxy-D-ribulose 5-phosphate. Its pathway is amino-acid biosynthesis; L-tryptophan biosynthesis; L-tryptophan from chorismate: step 3/5. This chain is N-(5'-phosphoribosyl)anthranilate isomerase, found in Methanococcus maripaludis (strain DSM 14266 / JCM 13030 / NBRC 101832 / S2 / LL).